The sequence spans 447 residues: Phosphoglucosamine mutase (447 aa).

Catalysis depends on Ser88, which acts as the Phosphoserine intermediate. Ser88, Asp231, Asp233, and Asp235 together coordinate Mg(2+). A Phosphoserine modification is found at Ser88.

This sequence belongs to the phosphohexose mutase family. In terms of assembly, monomer. Also forms large aggregates. Mg(2+) serves as cofactor. In terms of processing, activated by phosphorylation. Glucose-1,6-bisphosphate or fructose-1,6-bisphosphate can activate the enzyme in vitro. However, since glucose-1,6-bisphosphate is not believed to form in methanogens, the physiologically relevant activator might be a serine kinase protein.

It carries out the reaction alpha-D-glucosamine 1-phosphate = D-glucosamine 6-phosphate. Functionally, catalyzes the conversion of glucosamine-6-phosphate to glucosamine-1-phosphate. Also catalyzes the isomerization of glucose-1-phosphate to glucose-6-phosphate, but at a 5-fold lower rate. The protein is Phosphoglucosamine mutase (glmM) of Methanococcus maripaludis (strain DSM 14266 / JCM 13030 / NBRC 101832 / S2 / LL).